Reading from the N-terminus, the 126-residue chain is NADH-quinone oxidoreductase subunit A (126 aa).

3 consecutive transmembrane segments (helical) span residues 16–36 (ILVL…AAAI), 73–93 (ILFI…VAFG), and 95–115 (MSMT…VGFA).

It belongs to the complex I subunit 3 family. NDH-1 is composed of 14 different subunits. Subunits NuoA, H, J, K, L, M, N constitute the membrane sector of the complex.

Its subcellular location is the cell inner membrane. It carries out the reaction a quinone + NADH + 5 H(+)(in) = a quinol + NAD(+) + 4 H(+)(out). NDH-1 shuttles electrons from NADH, via FMN and iron-sulfur (Fe-S) centers, to quinones in the respiratory chain. The immediate electron acceptor for the enzyme in this species is believed to be ubiquinone. Couples the redox reaction to proton translocation (for every two electrons transferred, four hydrogen ions are translocated across the cytoplasmic membrane), and thus conserves the redox energy in a proton gradient. The sequence is that of NADH-quinone oxidoreductase subunit A from Rhodobacter capsulatus (Rhodopseudomonas capsulata).